The following is a 256-amino-acid chain: Tumor necrosis factor receptor superfamily member 9 (256 aa).

An N-terminal signal peptide occupies residues 1-23 (MGNNCYNVVVIVLLLVGCEKVGA). TNFR-Cys repeat units follow at residues 24-45 (VQNS…PVCK), 46-85 (SCPP…NAEC), 86-117 (ECIE…QGCK), and 118-159 (TCSL…VVCG). Residues 24–187 (VQNSCDNCQP…GPGGHSLQVL (164 aa)) are Extracellular-facing. Disulfide bonds link C28/C37, C31/C44, C47/C61, C64/C77, C67/C85, C87/C93, C98/C105, C101/C116, and C119/C133. 2 N-linked (GlcNAc...) asparagine glycosylation sites follow: N128 and N138. C139 and C158 are oxidised to a cystine. A helical membrane pass occupies residues 188–208 (TLFLALTSALLLALIFITLLF). The Cytoplasmic segment spans residues 209–256 (SVLKWIRKKFPHIFKQPFKKTTGAAQEEDACSCRCPQEEEGGGGGYEL).

In terms of assembly, predominantly homodimeric, but may also exist as a monomer. Associates with p56-LCK. Interacts with TRAF1, TRAF2 and TRAF3. Expressed in activated thymocytes, splenic T cells, CD4(+), and CD8(+) T-cells.

The protein resides in the cell membrane. Functionally, receptor for TNFSF9/4-1BBL. Conveys a signal that enhances CD8(+) T-cell survival, cytotoxicity, and mitochondrial activity, thereby promoting immunity against viruses and tumors. The protein is Tumor necrosis factor receptor superfamily member 9 (Tnfrsf9) of Mus musculus (Mouse).